The primary structure comprises 360 residues: Dihydroorotate dehydrogenase (quinone) (360 aa).

Residues 65 to 69 (AGLDK) and threonine 89 contribute to the FMN site. Lysine 69 provides a ligand contact to substrate. 114-118 (NRLGF) serves as a coordination point for substrate. FMN is bound by residues asparagine 147 and asparagine 180. Asparagine 180 contributes to the substrate binding site. Catalysis depends on serine 183, which acts as the Nucleophile. Asparagine 185 serves as a coordination point for substrate. Residues lysine 225 and threonine 253 each contribute to the FMN site. 254–255 (NT) contributes to the substrate binding site. Residues glycine 276, glycine 305, and 326–327 (YT) contribute to the FMN site.

It belongs to the dihydroorotate dehydrogenase family. Type 2 subfamily. Monomer. The cofactor is FMN.

The protein localises to the cell membrane. The catalysed reaction is (S)-dihydroorotate + a quinone = orotate + a quinol. It functions in the pathway pyrimidine metabolism; UMP biosynthesis via de novo pathway; orotate from (S)-dihydroorotate (quinone route): step 1/1. Functionally, catalyzes the conversion of dihydroorotate to orotate with quinone as electron acceptor. This chain is Dihydroorotate dehydrogenase (quinone), found in Verminephrobacter eiseniae (strain EF01-2).